The chain runs to 123 residues: Small ribosomal subunit protein uS12 (123 aa).

Asp89 is subject to 3-methylthioaspartic acid.

This sequence belongs to the universal ribosomal protein uS12 family. Part of the 30S ribosomal subunit. Contacts proteins S8 and S17. May interact with IF1 in the 30S initiation complex.

Functionally, with S4 and S5 plays an important role in translational accuracy. In terms of biological role, interacts with and stabilizes bases of the 16S rRNA that are involved in tRNA selection in the A site and with the mRNA backbone. Located at the interface of the 30S and 50S subunits, it traverses the body of the 30S subunit contacting proteins on the other side and probably holding the rRNA structure together. The combined cluster of proteins S8, S12 and S17 appears to hold together the shoulder and platform of the 30S subunit. This Brucella abortus (strain S19) protein is Small ribosomal subunit protein uS12.